Here is a 528-residue protein sequence, read N- to C-terminus: GMP synthase [glutamine-hydrolyzing] (528 aa).

The Glutamine amidotransferase type-1 domain occupies 13–204 (AIVILDFGSQ…VYHICGCEPD (192 aa)). Catalysis depends on C90, which acts as the Nucleophile. Active-site residues include H178 and E180. Residues 205–403 (WTTTAFIEEA…LGLPEEIVRR (199 aa)) enclose the GMPS ATP-PPase domain. 232–238 (SGGVDSS) contacts ATP.

As to quaternary structure, homodimer.

It catalyses the reaction XMP + L-glutamine + ATP + H2O = GMP + L-glutamate + AMP + diphosphate + 2 H(+). The protein operates within purine metabolism; GMP biosynthesis; GMP from XMP (L-Gln route): step 1/1. Its function is as follows. Catalyzes the synthesis of GMP from XMP. The protein is GMP synthase [glutamine-hydrolyzing] of Prochlorococcus marinus (strain MIT 9303).